Consider the following 570-residue polypeptide: Urease subunit alpha (570 aa).

Positions 135–570 (GGLDIHVHFN…ELPLAQRYHL (436 aa)) constitute a Urease domain. Residues H140, H142, and K219 each contribute to the Ni(2+) site. Residue K219 is modified to N6-carboxylysine. H221 contributes to the substrate binding site. H248 and H274 together coordinate Ni(2+). Catalysis depends on H322, which acts as the Proton donor. D362 is a Ni(2+) binding site.

Belongs to the metallo-dependent hydrolases superfamily. Urease alpha subunit family. In terms of assembly, heterotrimer of UreA (gamma), UreB (beta) and UreC (alpha) subunits. Three heterotrimers associate to form the active enzyme. It depends on Ni cation as a cofactor. Post-translationally, carboxylation allows a single lysine to coordinate two nickel ions.

It is found in the cytoplasm. It carries out the reaction urea + 2 H2O + H(+) = hydrogencarbonate + 2 NH4(+). It functions in the pathway nitrogen metabolism; urea degradation; CO(2) and NH(3) from urea (urease route): step 1/1. The chain is Urease subunit alpha from Natronomonas pharaonis (strain ATCC 35678 / DSM 2160 / CIP 103997 / JCM 8858 / NBRC 14720 / NCIMB 2260 / Gabara) (Halobacterium pharaonis).